We begin with the raw amino-acid sequence, 35 residues long: Photosystem II reaction center protein T (35 aa).

The chain crosses the membrane as a helical span at residues 3-23 (SVAYILIFTLCIGTIFFAIAF).

This sequence belongs to the PsbT family. PSII is composed of 1 copy each of membrane proteins PsbA, PsbB, PsbC, PsbD, PsbE, PsbF, PsbH, PsbI, PsbJ, PsbK, PsbL, PsbM, PsbT, PsbX, PsbY, PsbZ, Psb30/Ycf12, peripheral proteins PsbO, CyanoQ (PsbQ), PsbU, PsbV and a large number of cofactors. It forms dimeric complexes.

It localises to the cellular thylakoid membrane. Its function is as follows. Found at the monomer-monomer interface of the photosystem II (PS II) dimer, plays a role in assembly and dimerization of PSII. PSII is a light-driven water plastoquinone oxidoreductase, using light energy to abstract electrons from H(2)O, generating a proton gradient subsequently used for ATP formation. The sequence is that of Photosystem II reaction center protein T from Nostoc punctiforme (strain ATCC 29133 / PCC 73102).